The chain runs to 220 residues: Probable nicotinate-nucleotide adenylyltransferase (220 aa).

It belongs to the NadD family.

The catalysed reaction is nicotinate beta-D-ribonucleotide + ATP + H(+) = deamido-NAD(+) + diphosphate. Its pathway is cofactor biosynthesis; NAD(+) biosynthesis; deamido-NAD(+) from nicotinate D-ribonucleotide: step 1/1. Functionally, catalyzes the reversible adenylation of nicotinate mononucleotide (NaMN) to nicotinic acid adenine dinucleotide (NaAD). This is Probable nicotinate-nucleotide adenylyltransferase from Serratia proteamaculans (strain 568).